A 116-amino-acid polypeptide reads, in one-letter code: Ribonuclease P protein component (116 aa).

Belongs to the RnpA family. In terms of assembly, consists of a catalytic RNA component (M1 or rnpB) and a protein subunit.

It catalyses the reaction Endonucleolytic cleavage of RNA, removing 5'-extranucleotides from tRNA precursor.. RNaseP catalyzes the removal of the 5'-leader sequence from pre-tRNA to produce the mature 5'-terminus. It can also cleave other RNA substrates such as 4.5S RNA. The protein component plays an auxiliary but essential role in vivo by binding to the 5'-leader sequence and broadening the substrate specificity of the ribozyme. The sequence is that of Ribonuclease P protein component from Mycobacterium bovis (strain ATCC BAA-935 / AF2122/97).